Consider the following 681-residue polypeptide: Minichromosome maintenance domain-containing protein 2 (681 aa).

Residue S292 is modified to Phosphoserine. An MCM domain is found at 533 to 621 (KQFTTEDFEK…LIAALLFEIS (89 aa)).

In terms of biological role, plays an important role in meiotic recombination and associated DNA double-strand break repair. The sequence is that of Minichromosome maintenance domain-containing protein 2 (Mcmdc2) from Rattus norvegicus (Rat).